The primary structure comprises 24 residues: Ascaphin-3 (24 aa).

Expressed by the skin glands.

The protein localises to the secreted. Functionally, antimicrobial peptide that shows higher potency against Gram-negative bacteria than against Gram-positive bacteria. Has a very week hemolytic activity. In Ascaphus truei (Coastal tailed frog), this protein is Ascaphin-3.